We begin with the raw amino-acid sequence, 147 residues long: Hemoglobin subunit epsilon (147 aa).

Residues 3 to 147 form the Globin domain; that stretch reads HFTAEEKAAI…VAIALGHKYH (145 aa). Residues S14 and S51 each carry the phosphoserine modification. Heme b is bound by residues H64 and H93.

The protein belongs to the globin family. Heterotetramer of two alpha chains and two epsilon chains in early embryonic hemoglobin Gower-2; two zeta chains and two epsilon chains in early embryonic hemoglobin Gower-1. Red blood cells.

Functionally, the epsilon chain is a beta-type chain of early mammalian embryonic hemoglobin. In Lagothrix lagotricha (Brown woolly monkey), this protein is Hemoglobin subunit epsilon (HBE1).